Consider the following 222-residue polypeptide: Probable transaldolase (222 aa).

The active-site Schiff-base intermediate with substrate is lysine 91.

It belongs to the transaldolase family. Type 3B subfamily.

It is found in the cytoplasm. It carries out the reaction D-sedoheptulose 7-phosphate + D-glyceraldehyde 3-phosphate = D-erythrose 4-phosphate + beta-D-fructose 6-phosphate. The protein operates within carbohydrate degradation; pentose phosphate pathway; D-glyceraldehyde 3-phosphate and beta-D-fructose 6-phosphate from D-ribose 5-phosphate and D-xylulose 5-phosphate (non-oxidative stage): step 2/3. Functionally, transaldolase is important for the balance of metabolites in the pentose-phosphate pathway. This chain is Probable transaldolase, found in Chlorobaculum tepidum (strain ATCC 49652 / DSM 12025 / NBRC 103806 / TLS) (Chlorobium tepidum).